The chain runs to 407 residues: Na(+)-translocating NADH-quinone reductase subunit F (407 aa).

The helical transmembrane segment at 3–23 (IILGVVMFTLIVLALVLVILF) threads the bilayer. A 2Fe-2S ferredoxin-type domain is found at 32 to 126 (GDITISVNGD…DMDIELPEEI (95 aa)). Cys69, Cys75, Cys78, and Cys110 together coordinate [2Fe-2S] cluster. An FAD-binding FR-type domain is found at 129-269 (VKKWECTVIS…SGPFGEFFAK (141 aa)). Residues 272–389 (DAEMVFIGGG…PMMNAAVIGM (118 aa)) are catalytic.

It belongs to the NqrF family. As to quaternary structure, composed of six subunits; NqrA, NqrB, NqrC, NqrD, NqrE and NqrF. It depends on [2Fe-2S] cluster as a cofactor. FAD is required as a cofactor.

Its subcellular location is the cell inner membrane. It catalyses the reaction a ubiquinone + n Na(+)(in) + NADH + H(+) = a ubiquinol + n Na(+)(out) + NAD(+). NQR complex catalyzes the reduction of ubiquinone-1 to ubiquinol by two successive reactions, coupled with the transport of Na(+) ions from the cytoplasm to the periplasm. The first step is catalyzed by NqrF, which accepts electrons from NADH and reduces ubiquinone-1 to ubisemiquinone by a one-electron transfer pathway. The chain is Na(+)-translocating NADH-quinone reductase subunit F from Vibrio parahaemolyticus serotype O3:K6 (strain RIMD 2210633).